The primary structure comprises 131 residues: Large ribosomal subunit protein bL17 (131 aa).

It belongs to the bacterial ribosomal protein bL17 family. In terms of assembly, part of the 50S ribosomal subunit. Contacts protein L32.

This chain is Large ribosomal subunit protein bL17, found in Herminiimonas arsenicoxydans.